The primary structure comprises 113 residues: Large ribosomal subunit protein uL22 (113 aa).

This sequence belongs to the universal ribosomal protein uL22 family. As to quaternary structure, part of the 50S ribosomal subunit.

This protein binds specifically to 23S rRNA; its binding is stimulated by other ribosomal proteins, e.g. L4, L17, and L20. It is important during the early stages of 50S assembly. It makes multiple contacts with different domains of the 23S rRNA in the assembled 50S subunit and ribosome. Its function is as follows. The globular domain of the protein is located near the polypeptide exit tunnel on the outside of the subunit, while an extended beta-hairpin is found that lines the wall of the exit tunnel in the center of the 70S ribosome. The polypeptide is Large ribosomal subunit protein uL22 (Xylella fastidiosa (strain M12)).